The following is a 59-amino-acid chain: Cortexin domain containing 2 (59 aa).

The helical transmembrane segment at 20-40 threads the bilayer; it reads FAIAFVVLVFVFLIVMVFRCV.

The protein localises to the membrane. This is Cortexin domain containing 2 from Mus musculus (Mouse).